The chain runs to 33 residues: uncharacterized protein (33 aa).

This is an uncharacterized protein from Staphylococcus aureus (strain N315).